A 447-amino-acid chain; its full sequence is Argininosuccinate synthase (447 aa).

ATP-binding positions include 17-25 (AFSGGLDTS) and Ala43. Tyr99 contributes to the L-citrulline binding site. Residues Gly129 and Thr131 each contribute to the ATP site. L-aspartate contacts are provided by Thr131, Asn135, and Asp136. Asn135 contributes to the L-citrulline binding site. Position 136 (Asp136) interacts with ATP. 2 residues coordinate L-citrulline: Arg139 and Ser192. Asp194 contacts ATP. L-citrulline is bound by residues Thr201, Glu203, and Glu280.

It belongs to the argininosuccinate synthase family. Type 2 subfamily. In terms of assembly, homotetramer.

It localises to the cytoplasm. The enzyme catalyses L-citrulline + L-aspartate + ATP = 2-(N(omega)-L-arginino)succinate + AMP + diphosphate + H(+). It functions in the pathway amino-acid biosynthesis; L-arginine biosynthesis; L-arginine from L-ornithine and carbamoyl phosphate: step 2/3. The protein is Argininosuccinate synthase of Salmonella dublin (strain CT_02021853).